A 365-amino-acid chain; its full sequence is uncharacterized protein (365 aa).

The region spanning 45 to 289 (FSIGKSLTII…LKEVKKSNPK (245 aa)) is the Radical SAM core domain. 3 residues coordinate [4Fe-4S] cluster: Cys60, Cys68, and Cys71.

The cofactor is [4Fe-4S] cluster.

This is an uncharacterized protein from Methanocaldococcus jannaschii (strain ATCC 43067 / DSM 2661 / JAL-1 / JCM 10045 / NBRC 100440) (Methanococcus jannaschii).